The sequence spans 214 residues: Pyridoxine/pyridoxamine 5'-phosphate oxidase (214 aa).

Substrate-binding positions include 9 to 12 (RKNY) and K67. Residues 62–67 (RIVLLK), 77–78 (YT), K83, K84, and Q106 each bind FMN. Residues Y124, R128, and S132 each contribute to the substrate site. FMN contacts are provided by residues 141-142 (QS) and W186. Substrate is bound at residue 192–194 (RLH). R196 serves as a coordination point for FMN.

This sequence belongs to the pyridoxamine 5'-phosphate oxidase family. Homodimer. FMN serves as cofactor.

The catalysed reaction is pyridoxamine 5'-phosphate + O2 + H2O = pyridoxal 5'-phosphate + H2O2 + NH4(+). The enzyme catalyses pyridoxine 5'-phosphate + O2 = pyridoxal 5'-phosphate + H2O2. It functions in the pathway cofactor metabolism; pyridoxal 5'-phosphate salvage; pyridoxal 5'-phosphate from pyridoxamine 5'-phosphate: step 1/1. It participates in cofactor metabolism; pyridoxal 5'-phosphate salvage; pyridoxal 5'-phosphate from pyridoxine 5'-phosphate: step 1/1. In terms of biological role, catalyzes the oxidation of either pyridoxine 5'-phosphate (PNP) or pyridoxamine 5'-phosphate (PMP) into pyridoxal 5'-phosphate (PLP). The polypeptide is Pyridoxine/pyridoxamine 5'-phosphate oxidase (Leptospira borgpetersenii serovar Hardjo-bovis (strain JB197)).